The primary structure comprises 979 residues: Zinc finger protein 280D (979 aa).

Glycyl lysine isopeptide (Lys-Gly) (interchain with G-Cter in SUMO2) cross-links involve residues K32, K34, K74, and K87. Positions 89 to 101 (TSQHYTNPTSNPV) are enriched in polar residues. A disordered region spans residues 89 to 119 (TSQHYTNPTSNPVPASPINFHPESRSSDSSV). Phosphoserine is present on S104. Residues K126 and K140 each participate in a glycyl lysine isopeptide (Lys-Gly) (interchain with G-Cter in SUMO2) cross-link. The interval 157–236 (YQGGPTLSMA…TSSNQSKNGT (80 aa)) is disordered. Residues 169 to 187 (SESSFLSKRPSTSEVNNVN) show a composition bias toward polar residues. Glycyl lysine isopeptide (Lys-Gly) (interchain with G-Cter in SUMO2) cross-links involve residues K189, K210, K223, K233, K275, K284, and K292. Positions 195–235 (ESVSGANSSAVLPSVKSPSVTSSQAMLAKGTNTSSNQSKNG) are enriched in polar residues. 2 C2H2-type zinc fingers span residues 321-343 (FKCF…MKHH) and 358-381 (TTCQ…ESTH). The C2H2-type 3; degenerate zinc finger occupies 388 to 412 (TICKICELSFETEHVLLQHMKDNHK). C2H2-type zinc fingers lie at residues 418-441 (YVCQ…RTSH) and 449-469 (CPFC…YMKH). Disordered stretches follow at residues 523–608 (GPLQ…NKKS), 739–809 (LKKE…SDKE), and 896–979 (FLRK…KERS). Low complexity predominate over residues 527 to 541 (SGASPTPSISASAST). Polar residues-rich tracts occupy residues 542-584 (LQLS…NGSK) and 592-608 (SNMQ…NKKS). S545 is modified (phosphoserine). A Glycyl lysine isopeptide (Lys-Gly) (interchain with G-Cter in SUMO2) cross-link involves residue K550. Positions 739–784 (LKKEAPAKEQEPVSKEIARPNMAERETETSNSESKQDKAASSKEKN) are enriched in basic and acidic residues. K740 is covalently cross-linked (Glycyl lysine isopeptide (Lys-Gly) (interchain with G-Cter in SUMO2)). Residues 786-797 (CNANSFEGSSTT) are compositionally biased toward polar residues. A compositionally biased stretch (basic and acidic residues) spans 798–809 (KSEESITVSDKE). Residues 905–914 (SVSSDVSEQG) are compositionally biased toward polar residues. Phosphoserine occurs at positions 908 and 911. Acidic residues predominate over residues 970–979 (VDLEDEKERS). K976 participates in a covalent cross-link: Glycyl lysine isopeptide (Lys-Gly) (interchain with G-Cter in SUMO2).

Its subcellular location is the nucleus. Functionally, may function as a transcription factor. The protein is Zinc finger protein 280D (ZNF280D) of Homo sapiens (Human).